Here is a 428-residue protein sequence, read N- to C-terminus: D-amino acid dehydrogenase (428 aa).

3 to 17 (VVILGSGVVGVASAY) is an FAD binding site.

The protein belongs to the DadA oxidoreductase family. FAD serves as cofactor.

It carries out the reaction a D-alpha-amino acid + A + H2O = a 2-oxocarboxylate + AH2 + NH4(+). Its pathway is amino-acid degradation; D-alanine degradation; NH(3) and pyruvate from D-alanine: step 1/1. Functionally, oxidative deamination of D-amino acids. The sequence is that of D-amino acid dehydrogenase from Burkholderia cenocepacia (strain HI2424).